A 799-amino-acid chain; its full sequence is Armadillo repeat-containing protein wrm-1 (799 aa).

A compositionally biased stretch (basic and acidic residues) spans 1–10 (MEERGPDIEK). The segment at 1–60 (MEERGPDIEKYGSQPCTPLSFDPMLPSTSRVATPVRPSSTLSARQAPASPFRAQPQNMEP) is disordered. Residues 26 to 43 (PSTSRVATPVRPSSTLSA) show a composition bias toward polar residues. An ARM repeat occupies 454–496 (ESIRRVIQVVGSDDATIAERATGVLRNIGQPNKQNKVIMVRNG).

In terms of assembly, interacts (independently of ARM repeat) with nhr-25. Component of the beta-catenin-lit-1 complex (also called the lit-1/wrm-1 complex or the wrm-1/lit-1 kinase complex) at least composed of lit-1 and wrm-1. Interacts (via N-terminus) with lit-1; the interaction is direct and activates lit-1 kinase activity which leads to the phosphorylation of pop-1. This promotes pop-1 interaction with par-5 and translocation of pop-1 from the nucleus to the cytoplasm.

It is found in the cytoplasm. Its subcellular location is the cell cortex. The protein resides in the nucleus. Functionally, antagonistic role in the Wnt signaling pathway that operates in embryogenesis. When located at the cortex it has been shown to inhibit Wnt signaling during asymmetric cell division but when relocated to the nucleus it shows positive regulation. Has a role in blastomere signaling during endoderm specification. Component of the beta-catenin-lit-1 complex which promotes phosphorylation, down-regulation and subcellular relocation of pop-1. Within the complex, activates lit-1-dependent kinase activity. Can substitute for bar-1 indicating functional redundancy. Appears to have a role in centrosome positioning. Involved in the development of distal tip cells (DTC) by regulating the asymmetric distribution of cye-1 and cki-1 between the daughters of Z1.a and Z4.p cells. The protein is Armadillo repeat-containing protein wrm-1 of Caenorhabditis briggsae.